Reading from the N-terminus, the 426-residue chain is uncharacterized protein (426 aa).

The N-terminal stretch at 1-23 (MKKFILFLIILLFSIYFLNVSSA) is a signal peptide.

This is an uncharacterized protein from Methanocaldococcus jannaschii (strain ATCC 43067 / DSM 2661 / JAL-1 / JCM 10045 / NBRC 100440) (Methanococcus jannaschii).